The chain runs to 173 residues: Large ribosomal subunit protein uL16 (173 aa).

It belongs to the universal ribosomal protein uL16 family.

The chain is Large ribosomal subunit protein uL16 from Methanococcus maripaludis (strain C6 / ATCC BAA-1332).